The following is a 222-amino-acid chain: Uracil-DNA glycosylase (222 aa).

The Proton acceptor role is filled by D61.

Belongs to the uracil-DNA glycosylase (UDG) superfamily. UNG family.

It localises to the cytoplasm. The enzyme catalyses Hydrolyzes single-stranded DNA or mismatched double-stranded DNA and polynucleotides, releasing free uracil.. Excises uracil residues from the DNA which can arise as a result of misincorporation of dUMP residues by DNA polymerase or due to deamination of cytosine. The chain is Uracil-DNA glycosylase from Aeromonas salmonicida (strain A449).